The sequence spans 773 residues: Angiomotin-like protein 2 (773 aa).

3 disordered regions span residues 41–157 (GGAG…HVRS), 169–238 (RNGA…SPHF), and 259–309 (QYQY…LAQM). Basic and acidic residues-rich tracts occupy residues 80-91 (QGGETHLAENRL), 100-112 (KGEE…EAKA), and 141-152 (RRQDEALRELRH). Positions 101–302 (GEELPTYEEA…GPPGAQATSG (202 aa)) are required for interaction with CDH5. The residue at position 107 (Tyr107) is a Phosphotyrosine; by FGFR1. Polar residues predominate over residues 177–190 (HMSSSHSFPQLARS). The segment covering 196–213 (PRGPPAEGPEPRGPPPQY) has biased composition (pro residues). A required for interaction with CDH1 region spans residues 220 to 302 (QETAAVNDPR…GPPGAQATSG (83 aa)). A coiled-coil region spans residues 304–577 (AHLAQMESVL…KYLEERAMRQ (274 aa)). Glycyl lysine isopeptide (Lys-Gly) (interchain with G-Cter in ubiquitin) cross-links involve residues Lys342 and Lys403. 2 disordered regions span residues 589 to 611 (QRDT…NEGL) and 677 to 754 (WQGF…TTSL). Over residues 701 to 710 (EEPPATPPLP) the composition is skewed to pro residues. Positions 719–734 (DGSTQTDGPADSTSAC) are enriched in polar residues. Ser753 and Ser756 each carry phosphoserine. A PDZ-binding motif is present at residues 770 to 773 (EILI).

The protein belongs to the angiomotin family. As to quaternary structure, part of a complex composed of AMOTL2, MAGI1 and CDH5, within the complex AMOTL2 acts as a scaffold protein for the interaction of MAGI1 with CDH5. The complex is required for coupling actin fibers to cell junctions in endothelial cells. Within the complex AMOTL2 (via its N-terminus) interacts with CDH5. Interacts (via N-terminus) with MAGI1. Interacts (via N-terminus) with ACTB; the interaction facilitates binding of cell junction complexes to actin fibers in endothelial cells. Interacts with CDH1; the interaction may facilitate binding of radial actin fibers to cell junction complexes. Interacts with SRC. Interacts with YAP1; the interaction is required for ubiquitination of AMOTL2 and localization of YAP1 to tight junctions. Interacts with WWP1; the interaction facilitates WWP1 interaction with the Crumbs complex and subsequent WWP1 translocation to the plasma membrane. WWP1 interaction with the Crumbs complex promotes WWP1 monoubiquitination of AMOTL2 which subsequently activates the Hippo signaling pathway. When ubiquitinated interacts with LATS2 (via UBA domain); the interaction promotes LATS2 phosphorylation of YAP1. Interacts (via PPXY motif) with WWTR1/TAZ (via WW domain); the interaction promotes WWTR1/TAZ localization to the cytoplasm and thereby inhibition of its transcriptional properties. Interacts with PHLDB2; interaction may facilitate PHLDB2 localization to the myotube podosome cortex that surrounds the core. Post-translationally, monoubiquitinated at Lys-342 and Lys-403 by Crumbs complex-bound WWP1. De-ubiquitinated at Lys-342 and Lys-403 by USP9X; the interaction may be promoted by cell contact inhibition. Deubiquitination of AMOTL2 negatively regulates Hippo signaling activation. In terms of processing, phosphorylation at Tyr-107 is necessary for efficient binding to SRC and synergistically functioning with SRC to activate the downstream MAPK pathway.

It localises to the recycling endosome. It is found in the cytoplasm. Its subcellular location is the cell projection. The protein resides in the podosome. The protein localises to the cell junction. Functionally, regulates the translocation of phosphorylated SRC to peripheral cell-matrix adhesion sites. Required for proper architecture of actin filaments. Plays a role in coupling actin fibers to cell junctions in endothelial cells and is therefore required for correct endothelial cell morphology via facilitating transcellular transmission of mechanical force resulting in endothelial cell elongation. Required for the anchoring of radial actin fibers to CDH1 junction complexes at the cell membrane which facilitates organization of radial actin fiber structure and cellular response to contractile forces. This contributes to maintenance of cell area, size, shape, epithelial sheet organization and trophectoderm cell properties that facilitate blastocyst zona hatching. Inhibits the Wnt/beta-catenin signaling pathway, probably by recruiting CTNNB1 to recycling endosomes and hence preventing its translocation to the nucleus. Participates in angiogenesis. Activates the Hippo signaling pathway in response to cell contact inhibition via interaction with and ubiquitination by Crumbs complex-bound WWP1. Ubiquitinated AMOTL2 then interacts with LATS2 which in turn phosphorylates YAP1, excluding it from the nucleus and localizing it to the cytoplasm and tight junctions, therefore ultimately repressing YAP1-driven transcription of target genes. Acts to inhibit WWTR1/TAZ transcriptional coactivator activity via sequestering WWTR1/TAZ in the cytoplasm and at tight junctions. Regulates the size and protein composition of the podosome cortex and core at myofibril neuromuscular junctions. Selectively promotes FGF-induced MAPK activation through SRC. May play a role in the polarity, proliferation and migration of endothelial cells. In Rattus norvegicus (Rat), this protein is Angiomotin-like protein 2.